The chain runs to 28 residues: Seed allergenic protein 1 (28 aa).

Residues 1 to 28 are disordered; it reads VTXEEGXYSISDQSKVGEQXIRSPDREM.

The protein is Seed allergenic protein 1 of Prunus dulcis (Almond).